Here is an 892-residue protein sequence, read N- to C-terminus: NACHT, LRR and PYD domains-containing protein 6 (892 aa).

A Pyrin domain is found at 1 to 103; that stretch reads MDQPEAPCSS…AAQLQERRLQ (103 aa). Positions 158-181 are disordered; the sequence is APEEAMGPAEEPEPGRARRSDTHT. Residues 170 to 181 show a composition bias toward basic and acidic residues; sequence EPGRARRSDTHT. In terms of domain architecture, NACHT spans 196 to 513; that stretch reads LTVVLQGPAG…EFLAALSYLL (318 aa). 202–209 provides a ligand contact to ATP; the sequence is GPAGIGKT. Residues 352-356 are disordered; it reads KDKKK. Residues 462–487 form an LRR 1 repeat; sequence EKELEQLELRGSKVQTLFLSKKELPG. Residues 590–614 are disordered; that stretch reads APEVTEGAKGLEDTEEPEEEEEGEE. The span at 602–614 shows a compositional bias: acidic residues; sequence DTEEPEEEEEGEE. LRR repeat units lie at residues 727-747, 755-778, 811-834, and 845-868; these read LCHLSSLTLSHCKLPDAVCRD, APALTELGLLHNRLSEAGLRMLSE, SPALTTLDLSGCQLPAPMVTYLCA, and TLSLASVELSEQSLQELQAVKRAK.

This sequence belongs to the NLRP family. In terms of assembly, homomultimer; forms the NLRP6 inflammasome polymeric complex, a filament composed of homopolymers in response to pathogens and other damage-associated signals. The core of NLRP6 inflammasomes consists of a signal sensor component (NLRP6), an adapter (PYCARD/ASC), which recruits effector pro-inflammatory caspases (CASP1 and CASP4). Interacts (via pyrin domain) with PYCARD/ASC (via pyrin domain); interaction takes place following NLRP6 activation and formation of liquid-liquid phase separation (LLPS), initiating nucleation which greatly enhances further addition of soluble PYCARD/ASC molecules to the speck in a prion-like polymerization process. Clustered PYCARD/ASC nucleates the formation of CASP1 (or possibly CASP4) filaments through the interaction of their respective CARD domains, acting as a platform for CASP1 polymerization. CASP1 filament formation increases local enzyme concentration, resulting in trans-autocleavage and activation. Active CASP1 then processes IL1B and IL18 precursors, leading to the release of mature cytokines in the extracellular milieu and inflammatory response. Interacts with DHX15. In terms of processing, polyubiquitinated with 'Lys-63'-linked chains, promoting the interaction with PYCARD/ASC and formation of the NLRP6 inflammasome. Deubiquitination by CYLD decreases the interaction with PYCARD/ASC. Expressed in peripheral blood leukocytes, predominantly in granulocytes and, at lower levels, in CD4(+) and CD8(+) T-cells. Expressed in colonic myofibroblasts (at protein level).

Its subcellular location is the cytoplasm. It is found in the cytosol. The protein resides in the inflammasome. It localises to the cell membrane. The protein localises to the nucleus membrane. Acts as the sensor component of the NLRP6 inflammasome, which mediates inflammasome activation in response to various pathogen-associated signals, leading to maturation and secretion of IL1B and IL18. Inflammasomes are supramolecular complexes that assemble in the cytosol in response to pathogens and other damage-associated signals and play critical roles in innate immunity and inflammation. Acts as a recognition receptor (PRR): recognizes and binds specific pathogens and other damage-associated signals, such as lipoteichoic acid (LTA), a cell-wall component of Gram-positive bacteria, or double stranded RNA (dsRNA). May also recognize and bind lipopolysaccharide (LPS), a major component of the outer membrane of Gram-negative bacteria; however, LPS is probably not a major activator of the NLRP6 inflammasome. Following LTA- or dsRNA-binding, NLRP6 undergoes liquid-liquid phase separation (LLPS), enhancing multivalent interactions, an essential step for the formation of the NLRP6 inflammasome polymeric complex. The NLRP6 inflammasome acts by promoting recruitment of effector pro-inflammatory caspases (CASP1 and/or CASP4) that catalyze maturation and secretion of IL1B and IL18 in the extracellular milieu. The NLRP6 inflammasome plays a central role in the maintenance of epithelial integrity and host defense against microbial infections in the intestine. Required to restrict infection against Gram-positive bacteria by recognizing lipoteichoic acid (LTA), leading to recruitment of CASP4 and CASP1, and subsequent maturation and secretion of IL1B and IL18. Involved in intestinal antiviral innate immunity together with DHX15: recognizes and binds viral dsRNA to restrict infection by enteric viruses through the interferon pathway and GSDMD-dependent release of IL18. Required to prevent infection by the apicomplexan parasite Cryptosporidium in enterocytes by promoting GSDMD-dependent release of IL18. The NLRP6 inflammasome may also regulate the gut microbiota composition by acting as a sensor of microbiota-associated metabolites to form a PYCARD/ASC-dependent inflammasome for downstream IL18 release and secretion of antimicrobial peptides. Essential for gut mucosal self-renewal and proliferation. Regulate mucus secretion in an inflammasome- and autophagy-dependent manner to prevent invasion by enteric bacteria,. During systemic bacterial infections, the NLRP6 inflammasome negatively regulates neutrophil recruitment and neutrophil extracellular traps (NETs) formation. May promote peripheral nerve recovery following injury via an inflammasome-independent mechanism. This chain is NACHT, LRR and PYD domains-containing protein 6, found in Homo sapiens (Human).